A 33-amino-acid polypeptide reads, in one-letter code: uncharacterized protein (33 aa).

The protein localises to the cytoplasm. The protein resides in the nucleus. This is an uncharacterized protein from Schizosaccharomyces pombe (strain 972 / ATCC 24843) (Fission yeast).